The sequence spans 285 residues: MLYLTKIRNAESEFTENEQKIADFLRANVSELKSVSSRKMAKQLGISQSSIVKFAQKLGAQGFTELRMALIGEYSASREKTNATAQHLHSSITSDDSLEVIARKLNREKELALEQTCALFDYARLQKIIEVISKAPFIQITGLGGSALVGCDLSFKLMKIGYRVACEADTHVQATVSQALKKGDVQIAISYSGSKKEIVLCAEAARKQGATVIAITSLADSPLRRLAHFTLDTVSGETEWRSSSMSTRTAQNSVTDLLFVGLVQLNDVESLKMIQRSSELTQRLK.

Positions 1 to 77 (MLYLTKIRNA…MALIGEYSAS (77 aa)) constitute an HTH rpiR-type domain. The H-T-H motif DNA-binding region spans 37 to 56 (SRKMAKQLGISQSSIVKFAQ). The region spanning 128–268 (IIEVISKAPF…FVGLVQLNDV (141 aa)) is the SIS domain.

As to quaternary structure, homotetramer.

Its pathway is amino-sugar metabolism; N-acetylmuramate degradation [regulation]. Represses the expression of the murPQ operon involved in the uptake and degradation of N-acetylmuramic acid (MurNAc). Binds to two adjacent inverted repeats within the operator region. MurNAc 6-phosphate, the substrate of MurQ, is the specific inducer that weakens binding of MurR to the operator. This chain is HTH-type transcriptional regulator MurR, found in Escherichia coli O157:H7.